The sequence spans 104 residues: Protein Rev (104 aa).

At S5 the chain carries Phosphoserine; by host CK2. The tract at residues 18-26 is homomultimerization; that stretch reads VIKILYQSN. Residues 25–34 are compositionally biased toward polar residues; it reads SNPYPNSKGT. Disordered regions lie at residues 25 to 48 and 63 to 104; these read SNPYPNSKGTRQARRNRRRRWRAR and CLGG…ATTE. Positions 34-50 match the Nuclear localization signal and RNA-binding (RRE) motif; the sequence is TRQARRNRRRRWRARQR. The segment covering 35–48 has biased composition (basic residues); that stretch reads RQARRNRRRRWRAR. Pro residues predominate over residues 67 to 77; it reads PPEPVDLPLPP. A Nuclear export signal and binding to XPO1 motif is present at residues 73 to 84; sequence LPLPPLDRLTLD. Positions 91–104 are enriched in polar residues; sequence TPGTESQQGTATTE.

It belongs to the HIV-1 REV protein family. Homomultimer; when bound to the RRE. Multimeric assembly is essential for activity and may involve XPO1. Binds to human KPNB1, XPO1, TNPO1, RANBP5 and IPO7. Interacts with the viral Integrase. Interacts with human KHDRBS1. Interacts with human NAP1; this interaction decreases Rev multimerization and stimulates its activity. Interacts with human DEAD-box helicases DDX3 and DDX24; these interactions may serve for viral RNA export to the cytoplasm and packaging, respectively. Interacts with human PSIP1; this interaction may inhibit HIV-1 DNA integration by promoting dissociation of the Integrase-LEDGF/p75 complex. In terms of processing, asymmetrically arginine dimethylated at one site by host PRMT6. Methylation impairs the RNA-binding activity and export of viral RNA from the nucleus to the cytoplasm. Post-translationally, phosphorylated by protein kinase CK2. Presence of, and maybe binding to the N-terminus of the regulatory beta subunit of CK2 is necessary for CK2-mediated Rev's phosphorylation.

Its subcellular location is the host nucleus. The protein localises to the host nucleolus. It localises to the host cytoplasm. Its function is as follows. Escorts unspliced or incompletely spliced viral pre-mRNAs (late transcripts) out of the nucleus of infected cells. These pre-mRNAs carry a recognition sequence called Rev responsive element (RRE) located in the env gene, that is not present in fully spliced viral mRNAs (early transcripts). This function is essential since most viral proteins are translated from unspliced or partially spliced pre-mRNAs which cannot exit the nucleus by the pathway used by fully processed cellular mRNAs. Rev itself is translated from a fully spliced mRNA that readily exits the nucleus. Rev's nuclear localization signal (NLS) binds directly to KPNB1/Importin beta-1 without previous binding to KPNA1/Importin alpha-1. KPNB1 binds to the GDP bound form of RAN (Ran-GDP) and targets Rev to the nucleus. In the nucleus, the conversion from Ran-GDP to Ran-GTP dissociates Rev from KPNB1 and allows Rev's binding to the RRE in viral pre-mRNAs. Rev multimerization on the RRE via cooperative assembly exposes its nuclear export signal (NES) to the surface. Rev can then form a complex with XPO1/CRM1 and Ran-GTP, leading to nuclear export of the complex. Conversion from Ran-GTP to Ran-GDP mediates dissociation of the Rev/RRE/XPO1/RAN complex, so that Rev can return to the nucleus for a subsequent round of export. Beside KPNB1, also seems to interact with TNPO1/Transportin-1, RANBP5/IPO5 and IPO7/RANBP7 for nuclear import. The nucleoporin-like HRB/RIP is an essential cofactor that probably indirectly interacts with Rev to release HIV RNAs from the perinuclear region to the cytoplasm. The sequence is that of Protein Rev from Human immunodeficiency virus type 1 group N (isolate YBF30) (HIV-1).